The primary structure comprises 101 residues: Large ribosomal subunit protein bL21 (101 aa).

Belongs to the bacterial ribosomal protein bL21 family. In terms of assembly, part of the 50S ribosomal subunit. Contacts protein L20.

Functionally, this protein binds to 23S rRNA in the presence of protein L20. In Metamycoplasma arthritidis (strain 158L3-1) (Mycoplasma arthritidis), this protein is Large ribosomal subunit protein bL21.